A 129-amino-acid chain; its full sequence is Small ribosomal subunit protein uS12 (129 aa).

A 3-methylthioaspartic acid modification is found at Asp-89. Residues Arg-110–Lys-129 form a disordered region.

This sequence belongs to the universal ribosomal protein uS12 family. In terms of assembly, part of the 30S ribosomal subunit. Contacts proteins S8 and S17. May interact with IF1 in the 30S initiation complex.

With S4 and S5 plays an important role in translational accuracy. Its function is as follows. Interacts with and stabilizes bases of the 16S rRNA that are involved in tRNA selection in the A site and with the mRNA backbone. Located at the interface of the 30S and 50S subunits, it traverses the body of the 30S subunit contacting proteins on the other side and probably holding the rRNA structure together. The combined cluster of proteins S8, S12 and S17 appears to hold together the shoulder and platform of the 30S subunit. The chain is Small ribosomal subunit protein uS12 from Rickettsia bellii (strain OSU 85-389).